The primary structure comprises 365 residues: Alternative oxidase 2, mitochondrial (365 aa).

Low complexity predominate over residues 32–46 (TPPHSTTTTSPSSPA). The disordered stretch occupies residues 32–52 (TPPHSTTTTSPSSPAFHQPNH). Fe cation contacts are provided by E166, E205, and H208. Residues 220-242 (WFTRSIIYVGQGVFTNVFFLLYL) traverse the membrane as a helical segment. The Fe cation site is built by E256, E257, E312, and H315. The interval 345-365 (QPNHGINVMRPTGWEKQDLQL) is disordered.

The protein belongs to the alternative oxidase family. Fe cation serves as cofactor.

The protein localises to the mitochondrion inner membrane. Its function is as follows. Catalyzes cyanide-resistant oxygen consumption. May increase respiration when the cytochrome respiratory pathway is restricted, or in response to low temperatures. This is Alternative oxidase 2, mitochondrial (AOX2) from Candida albicans (Yeast).